A 127-amino-acid polypeptide reads, in one-letter code: Glycine cleavage system H protein (127 aa).

The Lipoyl-binding domain occupies 22–104; sequence EAVIGITHFA…YTEGWMLRVK (83 aa). Lys63 is modified (N6-lipoyllysine).

This sequence belongs to the GcvH family. As to quaternary structure, the glycine cleavage system is composed of four proteins: P, T, L and H. (R)-lipoate serves as cofactor.

The glycine cleavage system catalyzes the degradation of glycine. The H protein shuttles the methylamine group of glycine from the P protein to the T protein. This chain is Glycine cleavage system H protein, found in Nitratidesulfovibrio vulgaris (strain DP4) (Desulfovibrio vulgaris).